An 84-amino-acid polypeptide reads, in one-letter code: Kidney-associated antigen 1 (84 aa).

Positions 31 to 84 (PGAAAAHLPRWPPPQLAASRREAPPLSQRPHRTQGAGSPPETNEKLTNPQVKEK) are disordered. The span at 75-84 (KLTNPQVKEK) shows a compositional bias: polar residues.

In terms of tissue distribution, expressed in testis and kidney, and, at lower levels, in urinary bladder and liver. Expressed by a high proportion of tumors of various histologic origin, including melanomas, sarcomas and colorectal carcinomas.

This is Kidney-associated antigen 1 (KAAG1) from Homo sapiens (Human).